The sequence spans 513 residues: Cytochrome P450 86A1 (513 aa).

Residues 7-27 (ILTGYAVAALSVYALWFYFLS) traverse the membrane as a helical segment. C456 contacts heme.

It belongs to the cytochrome P450 family. Heme is required as a cofactor. Expressed in roots.

The protein resides in the membrane. It carries out the reaction an omega-methyl-long-chain fatty acid + reduced [NADPH--hemoprotein reductase] + O2 = an omega-hydroxy-long-chain fatty acid + oxidized [NADPH--hemoprotein reductase] + H2O + H(+). In terms of biological role, catalyzes the omega-hydroxylation of various fatty acids (FA). Acts on saturated and unsaturated fatty acids with chain lengths from C12 to C18 but not on hexadecane. The polypeptide is Cytochrome P450 86A1 (CYP86A1) (Arabidopsis thaliana (Mouse-ear cress)).